The following is a 460-amino-acid chain: V-type ATP synthase beta chain 2 (460 aa).

This sequence belongs to the ATPase alpha/beta chains family.

In terms of biological role, produces ATP from ADP in the presence of a proton gradient across the membrane. The V-type beta chain is a regulatory subunit. This is V-type ATP synthase beta chain 2 from Clostridium tetani (strain Massachusetts / E88).